We begin with the raw amino-acid sequence, 618 residues long: Grainyhead-like protein 1 homolog (618 aa).

Residues 1–91 form a transcription activation region; the sequence is MTQEYDNKRP…EVEHPEPDHS (91 aa). Basic and acidic residues predominate over residues 74–92; that stretch reads RRSSTAKPEVEHPEPDHSK. Positions 74 to 94 are disordered; the sequence is RRSSTAKPEVEHPEPDHSKRN. The residue at position 208 (Thr-208) is a Phosphothreonine. A Grh/CP2 DB domain is found at 248–474; the sequence is SGNNFEYTLE…DLDTQPVLFI (227 aa). Interaction with DNA regions lie at residues 380–389 and 427–430; these read TDFSSQKGVK and RKIR.

Belongs to the grh/CP2 family. Grainyhead subfamily. In terms of assembly, binds DNA as homodimer. Homodimer, also forms heterodimers with GRHL2 or GRHL3. In terms of processing, methylation at Arg-9 and Lys-116 may be involved in regulating transcriptional activation. Isoform 1 is highly expressed in brain, pancreas, tonsil, placenta and kidney. Isoform 2 is highly expressed in brain and liver. Expressed at very low levels in non-steroidogenic cells.

The protein localises to the nucleus. Transcription factor involved in epithelial development. Binds directly to the consensus DNA sequence 5'-AACCGGTT-3'. Important regulator of DSG1 in the context of hair anchorage and epidermal differentiation, participates in the maintenance of the skin barrier. There is no genetic interaction with GRHL3, nor functional cooperativity due to diverse target gene selectivity during epithelia development. May play a role in regulating glucose homeostasis and insulin signaling. Functionally, functions as a transcription activator. Its function is as follows. May function as a repressor in tissues where both isoform 1 and isoform 2 are expressed. The polypeptide is Grainyhead-like protein 1 homolog (Homo sapiens (Human)).